A 456-amino-acid polypeptide reads, in one-letter code: Equilibrative nucleoside transporter 2 (456 aa).

Residues 13 to 33 (LVGISFFILGLGTLLPWNFFI) traverse the membrane as a helical segment. The N-linked (GlcNAc...) asparagine glycan is linked to Asn56. 5 consecutive transmembrane segments (helical) span residues 69 to 89 (WVTL…SFLY), 98 to 118 (ILGS…LVKV), 123 to 143 (GLFF…CAVL), 161 to 181 (LFLS…LMSL), and 192 to 212 (LGYF…YLSL). The disordered stretch occupies residues 248–277 (GVPISPQQASPTLDLDPEKEPEPEEPQKPG). At Ser252 the chain carries Phosphoserine. Basic and acidic residues predominate over residues 263–275 (DPEKEPEPEEPQK). 5 helical membrane-spanning segments follow: residues 288 to 308 (IWLT…VFPA), 323 to 343 (WGLF…DWLG), 360 to 380 (LLPL…LCHV), 396 to 416 (FITF…LTMC), and 432 to 452 (ALMT…SFLF).

The protein belongs to the SLC29A/ENT transporter (TC 2.A.57) family.

It is found in the apical cell membrane. The protein resides in the basolateral cell membrane. The protein localises to the nucleus membrane. The enzyme catalyses inosine(in) = inosine(out). It catalyses the reaction adenosine(in) = adenosine(out). The catalysed reaction is uridine(out) = uridine(in). It carries out the reaction thymidine(in) = thymidine(out). The enzyme catalyses hypoxanthine(out) = hypoxanthine(in). It catalyses the reaction adenine(out) = adenine(in). The catalysed reaction is cytidine(in) = cytidine(out). It carries out the reaction thymine(out) = thymine(in). The enzyme catalyses uracil(in) = uracil(out). It catalyses the reaction guanine(out) = guanine(in). The catalysed reaction is guanosine(in) = guanosine(out). Its function is as follows. Bidirectional uniporter involved in the facilitative transport of nucleosides and nucleobases, and contributes to maintaining their cellular homeostasis. Functions as a Na(+)-independent, passive transporter. Involved in the transport of nucleosides such as inosine, adenosine, uridine, thymidine, cytidine and guanosine. Also able to transport purine nucleobases (hypoxanthine, adenine, guanine) and pyrimidine nucleobases (thymine, uracil). Involved in nucleoside transport at basolateral membrane of kidney cells, allowing liver absorption of nucleoside metabolites. Mediates apical nucleoside uptake into Sertoli cells, thereby regulating the transport of nucleosides in testis across the blood-testis-barrier. Mediates both the influx and efflux of hypoxanthine in skeletal muscle microvascular endothelial cells to control the amount of intracellular hypoxanthine available for xanthine oxidase-mediated ROS production. This is Equilibrative nucleoside transporter 2 from Mus musculus (Mouse).